We begin with the raw amino-acid sequence, 734 residues long: Cell surface glycoprotein gp138B (734 aa).

The signal sequence occupies residues 1–20 (MKIILTLSIFLICFLQLGQS). N-linked (GlcNAc...) asparagine glycans are attached at residues asparagine 58, asparagine 89, asparagine 124, asparagine 198, asparagine 224, asparagine 392, asparagine 420, asparagine 435, asparagine 482, asparagine 498, asparagine 523, asparagine 596, asparagine 605, asparagine 614, asparagine 621, and asparagine 630. The 89-residue stretch at 504–592 (PFIKSYGFLE…SSNEVTFYYF (89 aa)) folds into the IPT/TIG domain. A disordered region spans residues 678–712 (GETPTPSTTPSTTPSTTPSTTPSSTPTQSPGDDGS). Positions 680–712 (TPTPSTTPSTTPSTTPSTTPSSTPTQSPGDDGS) are enriched in low complexity. 4 consecutive repeat copies span residues 683-686 (PSTT), 687-690 (PSTT), 691-694 (PSTT), and 695-698 (PSTT). Residues 683–698 (PSTTPSTTPSTTPSTT) form a 4 X 4 AA tandem repeats of P-S-T-T region. Glycine 708 is lipidated: GPI-like-anchor amidated glycine. The propeptide at 709-734 (DDGSTSSTLSISFYLITLLLLTQQFI) is removed in mature form.

In terms of processing, the sugar chains may play important roles in cell fusion. Post-translationally, the GPI-like-anchor contains a phosphoceramide group, rather than a phosphatidyl group.

It is found in the cell membrane. Its function is as follows. Involved in the sexual cell fusion of D.discoideum. The chain is Cell surface glycoprotein gp138B (GP138B) from Dictyostelium discoideum (Social amoeba).